Consider the following 327-residue polypeptide: MKKDAENENLLHAYEHDEQSSKYFIKPDSRYSIDDDISVKIDGKQLEVRKWPTLLATAMVGVGWLSNEVALAWVHERVPDDYHPLPDLFFSHFPEIRGAIRIAEYIMMILLISALLVMFTHQHRWIVIRRVFFCIAMAYSFRALCVTIFQVPVPSINTYCAPKSNSSLELVAGRVVKMFWSAGIEQLRPRELCGDLIVSGHTLTIFTAFLVFKTYAPQRLQPLSHIYHVLAFTALFSILLARKHYMIDIVLGYTVSTRIFMEYHALAASYHNRTFETNPLAWSFWSFFIPIFECDAPANMHNHLLLYNRSTSSKNVSTLKKSRRSFE.

5 helical membrane-spanning segments follow: residues 54–74 (LLAT…LAWV), 99–119 (AIRI…LVMF), 131–151 (VFFC…IFQV), 192–212 (LCGD…FLVF), and 220–240 (LQPL…SILL). Histidine 201 is a catalytic residue. The Cytoplasmic segment spans residues 241–327 (ARKHYMIDIV…TLKKSRRSFE (87 aa)). Active-site residues include histidine 244 and aspartate 248.

The protein belongs to the sphingomyelin synthase family.

It localises to the membrane. The sequence is that of Sphingomyelin synthase-related 2 from Caenorhabditis elegans.